Reading from the N-terminus, the 91-residue chain is MSEPDVKSHKIEFPCDDYPIKVIGDTVVGFKDMVIEVLSKHAKVDLSTLAERQSKEGKYTTVQLHIVAESENQLHDINSALRATGIVKMVL.

This sequence belongs to the UPF0250 family.

The polypeptide is UPF0250 protein PP_4802 (Pseudomonas putida (strain ATCC 47054 / DSM 6125 / CFBP 8728 / NCIMB 11950 / KT2440)).